An 89-amino-acid chain; its full sequence is Small ribosomal subunit protein uS15 (89 aa).

It belongs to the universal ribosomal protein uS15 family. In terms of assembly, part of the 30S ribosomal subunit. Forms a bridge to the 50S subunit in the 70S ribosome, contacting the 23S rRNA.

Its function is as follows. One of the primary rRNA binding proteins, it binds directly to 16S rRNA where it helps nucleate assembly of the platform of the 30S subunit by binding and bridging several RNA helices of the 16S rRNA. Functionally, forms an intersubunit bridge (bridge B4) with the 23S rRNA of the 50S subunit in the ribosome. The protein is Small ribosomal subunit protein uS15 of Dinoroseobacter shibae (strain DSM 16493 / NCIMB 14021 / DFL 12).